A 677-amino-acid chain; its full sequence is uncharacterized protein (677 aa).

The segment at 1 to 87 (MGRHSKPDPE…PTGAEPIAAA (87 aa)) is disordered. The span at 17-29 (SDGHAAEQQHWED) shows a compositional bias: basic and acidic residues. Residues 51–64 (GHYSAVGGYSASGS) are compositionally biased toward low complexity. Helical transmembrane passes span 115-135 (VSIG…GVIL), 192-212 (VAVA…IGKW), 313-333 (EAVA…IGAV), and 474-494 (ATLA…IMLD).

The protein localises to the cell membrane. This is an uncharacterized protein from Mycobacterium tuberculosis (strain CDC 1551 / Oshkosh).